The primary structure comprises 294 residues: Indole-3-glycerol phosphate synthase (294 aa).

Belongs to the TrpC family.

It carries out the reaction 1-(2-carboxyphenylamino)-1-deoxy-D-ribulose 5-phosphate + H(+) = (1S,2R)-1-C-(indol-3-yl)glycerol 3-phosphate + CO2 + H2O. The protein operates within amino-acid biosynthesis; L-tryptophan biosynthesis; L-tryptophan from chorismate: step 4/5. This is Indole-3-glycerol phosphate synthase from Crocosphaera subtropica (strain ATCC 51142 / BH68) (Cyanothece sp. (strain ATCC 51142)).